Consider the following 281-residue polypeptide: Diaminopimelate epimerase (281 aa).

Substrate-binding residues include Asn-13, Gln-46, and Asn-66. Residue Cys-75 is the Proton donor of the active site. Residues 76–77 (GN), Asn-160, Asn-193, and 211–212 (ER) contribute to the substrate site. The Proton acceptor role is filled by Cys-220. Residue 221–222 (GT) coordinates substrate.

It belongs to the diaminopimelate epimerase family. In terms of assembly, homodimer.

It is found in the cytoplasm. It catalyses the reaction (2S,6S)-2,6-diaminopimelate = meso-2,6-diaminopimelate. It participates in amino-acid biosynthesis; L-lysine biosynthesis via DAP pathway; DL-2,6-diaminopimelate from LL-2,6-diaminopimelate: step 1/1. Catalyzes the stereoinversion of LL-2,6-diaminopimelate (L,L-DAP) to meso-diaminopimelate (meso-DAP), a precursor of L-lysine and an essential component of the bacterial peptidoglycan. This chain is Diaminopimelate epimerase, found in Acinetobacter baumannii (strain AB307-0294).